A 298-amino-acid chain; its full sequence is Quinolinate synthase (298 aa).

H19 and S36 together coordinate iminosuccinate. Position 81 (C81) interacts with [4Fe-4S] cluster. Iminosuccinate contacts are provided by residues Y107–N109 and S124. Residue C168 participates in [4Fe-4S] cluster binding. Iminosuccinate contacts are provided by residues H193–E195 and T210. C254 provides a ligand contact to [4Fe-4S] cluster.

Belongs to the quinolinate synthase family. Type 2 subfamily. The cofactor is [4Fe-4S] cluster.

Its subcellular location is the cytoplasm. It carries out the reaction iminosuccinate + dihydroxyacetone phosphate = quinolinate + phosphate + 2 H2O + H(+). It participates in cofactor biosynthesis; NAD(+) biosynthesis; quinolinate from iminoaspartate: step 1/1. Inhibited by 4,5 dithiohydroxyphthalic acid (DTHPA) analogs, which bind to the catalytic iron site of the [4Fe-4S] cluster. Its function is as follows. Catalyzes the condensation of iminoaspartate with dihydroxyacetone phosphate to form quinolinate. The polypeptide is Quinolinate synthase (Thermotoga maritima (strain ATCC 43589 / DSM 3109 / JCM 10099 / NBRC 100826 / MSB8)).